The sequence spans 370 residues: 4-hydroxy-3-methylbut-2-en-1-yl diphosphate synthase (flavodoxin) (370 aa).

[4Fe-4S] cluster contacts are provided by cysteine 270, cysteine 273, cysteine 305, and glutamate 312.

The protein belongs to the IspG family. Requires [4Fe-4S] cluster as cofactor.

The catalysed reaction is (2E)-4-hydroxy-3-methylbut-2-enyl diphosphate + oxidized [flavodoxin] + H2O + 2 H(+) = 2-C-methyl-D-erythritol 2,4-cyclic diphosphate + reduced [flavodoxin]. Its pathway is isoprenoid biosynthesis; isopentenyl diphosphate biosynthesis via DXP pathway; isopentenyl diphosphate from 1-deoxy-D-xylulose 5-phosphate: step 5/6. Functionally, converts 2C-methyl-D-erythritol 2,4-cyclodiphosphate (ME-2,4cPP) into 1-hydroxy-2-methyl-2-(E)-butenyl 4-diphosphate. This is 4-hydroxy-3-methylbut-2-en-1-yl diphosphate synthase (flavodoxin) from Marinomonas sp. (strain MWYL1).